Consider the following 526-residue polypeptide: Neutrophil cytosol factor 2 (526 aa).

3 TPR repeats span residues 37 to 70 (SRIC…DKHL), 71 to 104 (AVAY…LRGN), and 121 to 154 (CEVL…KSEP). Thr233 is subject to Phosphothreonine. The region spanning 240-299 (LEGEAHRVLFGFVPETKEELQVMPGNIVFVLKKGNDNWATVMFNGQKGLVPCNYLEPVEL) is the SH3 1 domain. Positions 303 to 315 (PQQQPQEESSPQS) are enriched in low complexity. The interval 303–346 (PQQQPQEESSPQSDIPAPPSSKAPGRPQLSPGQKQKEEPKEVKL) is disordered. Residues 336–345 (KQKEEPKEVK) are compositionally biased toward basic and acidic residues. Residues 351–429 (PYTLKVHYKY…YCLTLWCENT (79 aa)) enclose the PB1 domain. A Phosphoserine modification is found at Ser399. The interval 433–458 (QGFPDEPKESEKADANNQTTEPQLKK) is disordered. Over residues 437 to 446 (DEPKESEKAD) the composition is skewed to basic and acidic residues. An SH3 2 domain is found at 457-516 (KKGSQVEALFSYEATQPEDLEFQEGDIILVLSKVNEEWLEGECKGKVGIFPKVFVEDCAT).

The protein belongs to the NCF2/NOXA1 family. In terms of assembly, component of the phagocyte NADPH oxidase complex composed of an obligatory core heterodimer formed by the membrane proteins CYBA and CYBB and the cytosolic regulatory subunits NCF1/p47-phox, NCF2/p67-phox, NCF4/p40-phox and the small GTPase RAC1 or RAC2. Part of a cytosolic complex composed at least by NCF1, NCF2 and NCF4. Interacts with NCF4. Interacts (via the C-terminal SH3 domain) with NCF1 (via C-terminus). Interacts with SYTL1 and RAC1. May interact with NOXO1. Interacts with S100A8 and calprotectin (S100A8/9). Interacts with GBP7 (via GB1/RHD3-type G domain). Interacts with CYBB; the interaction is enhanced in the presence of GBP7.

It is found in the cytoplasm. Its function is as follows. Subunit of the phagocyte NADPH oxidase complex that mediates the transfer of electrons from cytosolic NADPH to O2 to produce the superoxide anion (O2(-)). In the activated complex, electrons are first transferred from NADPH to flavin adenine dinucleotide (FAD) and subsequently transferred via two heme molecules to molecular oxygen, producing superoxide through an outer-sphere reaction. Activation of the NADPH oxidase complex is initiated by the assembly of cytosolic subunits of the NADPH oxidase complex with the core NADPH oxidase complex to form a complex at the plasma membrane or phagosomal membrane. This activation process is initiated by phosphorylation dependent binding of the cytosolic NCF1/p47-phox subunit to the C-terminus of CYBA/p22-phox. This is Neutrophil cytosol factor 2 from Homo sapiens (Human).